We begin with the raw amino-acid sequence, 417 residues long: Riboflavin biosynthesis protein RibBA (417 aa).

The segment at Met-1–Lys-204 is DHBP synthase. D-ribulose 5-phosphate-binding positions include Arg-28–Glu-29, Asp-33, Arg-141–Thr-145, and Glu-165. Glu-29 is a Mg(2+) binding site. His-144 contacts Mg(2+). Residues His-205 to Ala-417 form a GTP cyclohydrolase II region. Arg-259–Glu-263 contacts GTP. Zn(2+) contacts are provided by Cys-264, Cys-275, and Cys-277. Residues Gln-280, Glu-303–Arg-305, and Thr-325 each bind GTP. Asp-337 functions as the Proton acceptor; for GTP cyclohydrolase activity in the catalytic mechanism. Arg-339 acts as the Nucleophile; for GTP cyclohydrolase activity in catalysis. GTP is bound by residues Thr-360 and Lys-365.

It in the N-terminal section; belongs to the DHBP synthase family. The protein in the C-terminal section; belongs to the GTP cyclohydrolase II family. Requires Mg(2+) as cofactor. It depends on Mn(2+) as a cofactor. Zn(2+) serves as cofactor.

The enzyme catalyses D-ribulose 5-phosphate = (2S)-2-hydroxy-3-oxobutyl phosphate + formate + H(+). It carries out the reaction GTP + 4 H2O = 2,5-diamino-6-hydroxy-4-(5-phosphoribosylamino)-pyrimidine + formate + 2 phosphate + 3 H(+). It functions in the pathway cofactor biosynthesis; riboflavin biosynthesis; 2-hydroxy-3-oxobutyl phosphate from D-ribulose 5-phosphate: step 1/1. The protein operates within cofactor biosynthesis; riboflavin biosynthesis; 5-amino-6-(D-ribitylamino)uracil from GTP: step 1/4. Its function is as follows. Catalyzes the conversion of D-ribulose 5-phosphate to formate and 3,4-dihydroxy-2-butanone 4-phosphate. In terms of biological role, catalyzes the conversion of GTP to 2,5-diamino-6-ribosylamino-4(3H)-pyrimidinone 5'-phosphate (DARP), formate and pyrophosphate. This is Riboflavin biosynthesis protein RibBA from Mycobacteroides abscessus (strain ATCC 19977 / DSM 44196 / CCUG 20993 / CIP 104536 / JCM 13569 / NCTC 13031 / TMC 1543 / L948) (Mycobacterium abscessus).